Here is a 240-residue protein sequence, read N- to C-terminus: Extracellular superoxide dismutase [Cu-Zn] (240 aa).

An N-terminal signal peptide occupies residues Met1–Ala18. Disulfide bonds link Cys63-Cys208 and Cys125-Cys207. The N-linked (GlcNAc...) asparagine glycan is linked to Asn107. Cu cation is bound by residues His114, His116, and His131. Zn(2+)-binding residues include His131, His139, His142, and Asp145. A Cu cation-binding site is contributed by His181. 2 N-linked (Glc) (glycation) lysine; in vitro glycosylation sites follow: Lys229 and Lys230.

It belongs to the Cu-Zn superoxide dismutase family. In terms of assembly, homotetramer. Directly interacts with ATP7A; this interaction is copper-dependent and is required for SOD3 activity. It depends on Cu cation as a cofactor. Requires Zn(2+) as cofactor. In terms of tissue distribution, expressed in blood vessels, heart, lung, kidney and placenta. Major SOD isoenzyme in extracellular fluids such as plasma, lymph and synovial fluid.

It localises to the secreted. It is found in the extracellular space. The protein localises to the golgi apparatus. The protein resides in the trans-Golgi network. It carries out the reaction 2 superoxide + 2 H(+) = H2O2 + O2. Its function is as follows. Protect the extracellular space from toxic effect of reactive oxygen intermediates by converting superoxide radicals into hydrogen peroxide and oxygen. This is Extracellular superoxide dismutase [Cu-Zn] (SOD3) from Homo sapiens (Human).